The sequence spans 41 residues: U-megalopygitoxin(11)-Mo28 (41 aa).

The first 29 residues, 1–29 (MRTTLLLLIIAITVMVFVSEAYAAPAPEP), serve as a signal peptide directing secretion.

Belongs to the caterpillar 11 family. Expressed by the venom apparatus.

The protein resides in the secreted. Probable toxin. This Megalopyge opercularis (Southern flannel moth) protein is U-megalopygitoxin(11)-Mo28.